Reading from the N-terminus, the 407-residue chain is MKEKLIDRLTSYVVIDTQSDASSTTTPSTDKQWNLLNQLKQEIEQLGLETDIDEYGYLFATLPSNTNKDVPVIGLLAHVDTATDFTGTNVNPQIIQSYDGNDITLKSGLKIETAKFPELSLYKGHTLITTDGTTLLGADNKAGIAEIMTAIEYLIAHPEIKHGKIRFGFTPDEEIGRGPHKFDVERFACDFAYTIDGGRRGELQYESFNAAGVNVTFNGVNVHPGSAKDKMVNALNLAVRFQSSLPANEVPEHTEGYEGFFHLMELNGNVERAQLSYIIRDHSREQFEARKVKMHEIITSIQNEYGEQAAHIEINDQYYNMGEKITPHPQLIDIPLEVMKSLNIEPIVEPIRGGTDGSQLSYMGLPTPNLFTGGENYHGPYEYVSVDDMERAVMNIVGILQKFEEKA.

Residue H78 participates in Zn(2+) binding. The active site involves D80. D139 is a Zn(2+) binding site. Residue E173 is the Proton acceptor of the active site. Residues E174, D196, and H378 each coordinate Zn(2+).

It belongs to the peptidase M20B family. It depends on Zn(2+) as a cofactor.

It is found in the cytoplasm. It catalyses the reaction Release of the N-terminal residue from a tripeptide.. Functionally, cleaves the N-terminal amino acid of tripeptides. The chain is Peptidase T from Macrococcus caseolyticus (strain JCSC5402) (Macrococcoides caseolyticum).